Consider the following 1073-residue polypeptide: PX domain-containing protein LEC1 (1073 aa).

The span at 218 to 228 (CTESVDNDKSS) shows a compositional bias: basic and acidic residues. The segment at 218 to 240 (CTESVDNDKSSKSTPTSSPKSHA) is disordered. Over residues 229–238 (KSTPTSSPKS) the composition is skewed to low complexity. The region spanning 273–506 (LFSKLSLGVP…RFFLSGPNLD (234 aa)) is the PX domain. Phosphoserine is present on residues Ser-310 and Ser-451. Residues 431-456 (IKEEDNIDEDEYEEEGEGEESDFDEY) are disordered. Acidic residues predominate over residues 432–453 (KEEDNIDEDEYEEEGEGEESDF).

The protein resides in the endoplasmic reticulum membrane. It is found in the lipid droplet. Phosphoinositide-binding protein that plays a role in regulation of ergosterol distribution in the cell. Facilitates ergosterol transport between plasma membrane and lipid droplets. The chain is PX domain-containing protein LEC1 from Saccharomyces cerevisiae (strain ATCC 204508 / S288c) (Baker's yeast).